We begin with the raw amino-acid sequence, 135 residues long: Putative pre-16S rRNA nuclease (135 aa).

It belongs to the YqgF nuclease family.

It localises to the cytoplasm. Functionally, could be a nuclease involved in processing of the 5'-end of pre-16S rRNA. This is Putative pre-16S rRNA nuclease from Clostridium novyi (strain NT).